The following is a 464-amino-acid chain: Clusterin-like protein 1 (464 aa).

The N-terminal stretch at 1–20 (MQPPLFVISVYLLWLKYCDS) is a signal peptide. The stretch at 56–109 (IKQMKIMMERREEEHAKLMKALKKCKEEKQEAQKLMNEVQERLEEEEKLCQASS) forms a coiled coil. Disulfide bonds link Cys105–Cys331, Cys116–Cys323, Cys119–Cys320, Cys124–Cys313, and Cys131–Cys303. 6 N-linked (GlcNAc...) asparagine glycosylation sites follow: Asn195, Asn255, Asn309, Asn349, Asn398, and Asn429.

It belongs to the clusterin family.

Its subcellular location is the secreted. This is Clusterin-like protein 1 from Rattus norvegicus (Rat).